The following is a 43-amino-acid chain: Protein PsbN (43 aa).

Residues 7-27 form a helical membrane-spanning segment; it reads VAIFISGLLVSFTGYALYTAF.

Belongs to the PsbN family.

It localises to the plastid. It is found in the chloroplast thylakoid membrane. Its function is as follows. May play a role in photosystem I and II biogenesis. This is Protein PsbN from Daucus carota (Wild carrot).